We begin with the raw amino-acid sequence, 491 residues long: Equilibrative nucleobase transporter 1 (491 aa).

Residues 17–37 traverse the membrane as a helical segment; it reads LLECLGFAGVLFGWPSLVFVF. An N-linked (GlcNAc...) asparagine glycan is attached at Asn-56. The next 5 membrane-spanning stretches (helical) occupy residues 72 to 92, 102 to 122, 123 to 143, 156 to 176, and 188 to 208; these read LIFT…GYIF, LIAI…SAGS, AVLL…FLIT, STII…FLII, and ASFI…FLLM. N-linked (GlcNAc...) asparagine glycans are attached at residues Asn-220 and Asn-229. Residue Ser-253 is modified to Phosphoserine. Residue Thr-258 is modified to Phosphothreonine. The next 6 membrane-spanning stretches (helical) occupy residues 279–299, 319–339, 356–376, 396–418, 427–447, and 456–476; these read FAWH…FIGT, TNAF…GLLM, STLA…SLLC, ILQV…LAFP, GLVM…FTLI, and FYVN…PFLV.

The protein belongs to the SLC43A transporter (TC 2.A.1.44) family. Widely expressed with highest levels in the liver and lung, followed by the pancreas. Highly expressed in macrophages.

It localises to the basolateral cell membrane. The enzyme catalyses adenine(out) = adenine(in). It catalyses the reaction guanine(out) = guanine(in). It carries out the reaction hypoxanthine(out) = hypoxanthine(in). Adenine transport is strongly inhibited by decynium-22. Its activity is regulated as follows. 6-mercaptopurine-transport is inhibited by 6-thioguanine, 6-methylmercaptopurine and decynium-22. Functionally, sodium-independent purine-selective nucleobase transporter which mediates the equilibrative transport of extracellular purine nucleobases such as adenine, guanine and hypoxanthine. May regulate fatty acid (FA) transport in adipocytes, acting as a positive regulator of FA efflux and as a negative regulator of FA uptake. In terms of biological role, sodium-independent purine-selective nucleobase transporter which mediates the equilibrative transport of extracellular purine nucleobase adenine. Mediates the influx and efflux of the purine nucleobase analog drug 6-mercaptopurine across the membrane. The chain is Equilibrative nucleobase transporter 1 (SLC43A3) from Homo sapiens (Human).